We begin with the raw amino-acid sequence, 250 residues long: Hydroxyacylglutathione hydrolase (250 aa).

7 residues coordinate Zn(2+): histidine 53, histidine 55, aspartate 57, histidine 58, histidine 111, aspartate 128, and histidine 166.

Belongs to the metallo-beta-lactamase superfamily. Glyoxalase II family. As to quaternary structure, monomer. It depends on Zn(2+) as a cofactor.

It catalyses the reaction an S-(2-hydroxyacyl)glutathione + H2O = a 2-hydroxy carboxylate + glutathione + H(+). It functions in the pathway secondary metabolite metabolism; methylglyoxal degradation; (R)-lactate from methylglyoxal: step 2/2. Functionally, thiolesterase that catalyzes the hydrolysis of S-D-lactoyl-glutathione to form glutathione and D-lactic acid. The sequence is that of Hydroxyacylglutathione hydrolase from Methylobacillus flagellatus (strain ATCC 51484 / DSM 6875 / VKM B-1610 / KT).